A 299-amino-acid polypeptide reads, in one-letter code: Ig alpha chain C region (299 aa).

Ig-like domains follow at residues 71–167 (PSLS…ATIS) and 174–276 (PQVH…KTID).

Functionally, ig alpha is the major immunoglobulin class in body secretions. It may serve both to defend against local infection and to prevent access of foreign antigens to the general immunologic system. The chain is Ig alpha chain C region from Oryctolagus cuniculus (Rabbit).